Here is a 264-residue protein sequence, read N- to C-terminus: tRNA (guanine-N(1)-)-methyltransferase (264 aa).

S-adenosyl-L-methionine is bound by residues glycine 125 and 145–150 (LGDFVL).

Belongs to the RNA methyltransferase TrmD family. In terms of assembly, homodimer.

It localises to the cytoplasm. It catalyses the reaction guanosine(37) in tRNA + S-adenosyl-L-methionine = N(1)-methylguanosine(37) in tRNA + S-adenosyl-L-homocysteine + H(+). Functionally, specifically methylates guanosine-37 in various tRNAs. The sequence is that of tRNA (guanine-N(1)-)-methyltransferase from Burkholderia cenocepacia (strain HI2424).